Consider the following 379-residue polypeptide: Transaminase htyB (379 aa).

A pyridoxal 5'-phosphate-binding site is contributed by Arg92. Lys203 carries the post-translational modification N6-(pyridoxal phosphate)lysine. Glu239 lines the pyridoxal 5'-phosphate pocket.

Belongs to the class-IV pyridoxal-phosphate-dependent aminotransferase family. Pyridoxal 5'-phosphate serves as cofactor.

It functions in the pathway antifungal biosynthesis. Transaminase; part of the gene cluster that mediates the de novo generation of L-homotyrosine from acetyl-CoA and 4-hydroxyphenyl-pyruvate. L-homotyrosine is a building block of echinocandin B, a fungal lipidated cyclic hexapeptide that acts as an antifungal agent. L-homotyrosine 4-hydroxyphenyl-pyruvate first undergoes an aldol-type condensation by htyA with the C-2 of acetyl-CoA followed by the release of CoA to form 2-(4-hydroxybenzyl)-malate. This is followed by isomerization of 2-(4-hydroxy-benzyl)-malate to 3-(4-hydroxybenzyl)-malate by htyD. Thereafter, 3-(4-hydroxybenzyl)-malate undergoes decarboxylation and oxidation to form 2-oxo-4-(4-hydroxybenzyl)butanoic acid, coupled to reduction of NAD(+) to NADH by htyC. The product then undergoes transamination catalyzed by htyB to form L-homotyrosine. The sequence is that of Transaminase htyB from Aspergillus rugulosus (Emericella rugulosa).